The primary structure comprises 259 residues: DNA-directed RNA polymerase subunit Rpo3 (259 aa).

This sequence belongs to the archaeal Rpo3/eukaryotic RPB3 RNA polymerase subunit family. In terms of assembly, part of the RNA polymerase complex.

It localises to the cytoplasm. It carries out the reaction RNA(n) + a ribonucleoside 5'-triphosphate = RNA(n+1) + diphosphate. Its function is as follows. DNA-dependent RNA polymerase (RNAP) catalyzes the transcription of DNA into RNA using the four ribonucleoside triphosphates as substrates. This Pyrobaculum arsenaticum (strain DSM 13514 / JCM 11321 / PZ6) protein is DNA-directed RNA polymerase subunit Rpo3.